The primary structure comprises 111 residues: Cystatin (111 aa).

The Cystatin domain occupies 3–103; sequence GGLSPRDVTD…CRFEVWSRPW (101 aa). A Secondary area of contact motif is present at residues 47–51; that stretch reads QVVSG. Residues cysteine 65 and cysteine 81 are joined by a disulfide bond.

The protein belongs to the cystatin family. In terms of tissue distribution, expressed by the venom gland.

The protein localises to the secreted. In terms of biological role, inhibits various C1 cysteine proteases including cathepsin L, papain and cathepsin B. This protein has no toxic activity and its function in the venom is unknown. It may play a role as housekeeping or regulatory protein. The chain is Cystatin from Bitis arietans (African puff adder).